Consider the following 380-residue polypeptide: F-box/kelch-repeat protein At3g18720 (380 aa).

In terms of domain architecture, F-box spans 47 to 94 (LWDKQIPTDLLQEILSRLGLKANIHASLVCKTWLKEAVSVRKFQSRPW). Kelch repeat units follow at residues 190 to 233 (CVIS…INRC) and 234 to 279 (IFSN…LVRQ).

The chain is F-box/kelch-repeat protein At3g18720 from Arabidopsis thaliana (Mouse-ear cress).